A 202-amino-acid chain; its full sequence is FMN-dependent NADH:quinone oxidoreductase (202 aa).

FMN contacts are provided by residues Ser10, 16–18, and 96–99; these read SAS and MWNF.

The protein belongs to the azoreductase type 1 family. In terms of assembly, homodimer. FMN serves as cofactor.

It carries out the reaction 2 a quinone + NADH + H(+) = 2 a 1,4-benzosemiquinone + NAD(+). The enzyme catalyses N,N-dimethyl-1,4-phenylenediamine + anthranilate + 2 NAD(+) = 2-(4-dimethylaminophenyl)diazenylbenzoate + 2 NADH + 2 H(+). In terms of biological role, quinone reductase that provides resistance to thiol-specific stress caused by electrophilic quinones. Also exhibits azoreductase activity. Catalyzes the reductive cleavage of the azo bond in aromatic azo compounds to the corresponding amines. This chain is FMN-dependent NADH:quinone oxidoreductase, found in Beijerinckia indica subsp. indica (strain ATCC 9039 / DSM 1715 / NCIMB 8712).